The primary structure comprises 197 residues: Phosphoheptose isomerase (197 aa).

Residues 34-192 (MVNALINGNK…CEGVDDCLFP (159 aa)) form the SIS domain. Substrate-binding positions include 49 to 51 (NGG), Gln62, 91 to 92 (ND), Ser122, and His172. Gln62 provides a ligand contact to Zn(2+). The Zn(2+) site is built by His172 and His180.

It belongs to the SIS family. GmhA subfamily. As to quaternary structure, homotetramer. The cofactor is Zn(2+).

The protein localises to the cytoplasm. It catalyses the reaction 2 D-sedoheptulose 7-phosphate = D-glycero-alpha-D-manno-heptose 7-phosphate + D-glycero-beta-D-manno-heptose 7-phosphate. It participates in carbohydrate biosynthesis; D-glycero-D-manno-heptose 7-phosphate biosynthesis; D-glycero-alpha-D-manno-heptose 7-phosphate and D-glycero-beta-D-manno-heptose 7-phosphate from sedoheptulose 7-phosphate: step 1/1. Its function is as follows. Catalyzes the isomerization of sedoheptulose 7-phosphate in D-glycero-D-manno-heptose 7-phosphate. The chain is Phosphoheptose isomerase from Pseudoalteromonas atlantica (strain T6c / ATCC BAA-1087).